A 3387-amino-acid polypeptide reads, in one-letter code: Genome polyprotein (3387 aa).

Residues 1-100 (MNQRKKVARP…LNILNGRKRS (100 aa)) are Cytoplasmic-facing. The hydrophobic; homodimerization of capsid protein C stretch occupies residues 36–71 (LFSGKGPLRMVLAFITFLRVLSIPPTAGILKRWGQL). The propeptide at 100–113 (STITLLCLIPTVMA) is ER anchor for the capsid protein C, removed in mature form by serine protease NS3. Residues 101–117 (TITLLCLIPTVMAFHLS) traverse the membrane as a helical segment. Residues 118-237 (TRDGEPLMIV…GAWKHAQRVE (120 aa)) are Extracellular-facing. An N-linked (GlcNAc...) asparagine; by host glycan is attached at Asn182. A helical membrane pass occupies residues 238 to 258 (SWILRNPGFALLAGFMAYMIG). The Cytoplasmic segment spans residues 259–265 (QTGIQRT). A helical transmembrane segment spans residues 266-279 (VFFILMMLVAPSYG). At 280–725 (MRCVGVGNRD…HQVFGSVYTT (446 aa)) the chain is on the extracellular side. 4 cysteine pairs are disulfide-bonded: Cys282-Cys309, Cys339-Cys400, Cys353-Cys384, and Cys371-Cys395. A glycan (N-linked (GlcNAc...) asparagine; by host) is linked at Asn346. The fusion peptide stretch occupies residues 377–390 (DRGWGNGCGLFGKG). The N-linked (GlcNAc...) asparagine; by host glycan is linked to Asn432. Intrachain disulfides connect Cys464–Cys564 and Cys581–Cys612. Residues 726–746 (MFGGVSWMVRILIGLLVLWIG) traverse the membrane as a helical segment. Over 747–753 (TNSRNTS) the chain is Cytoplasmic. The chain crosses the membrane as a helical span at residues 754-774 (MAMSCIAVGGITLFLGFTVHA). Topologically, residues 775 to 1194 (DMGCAVSWSG…MLGDTMSGRM (420 aa)) are extracellular. Intrachain disulfides connect Cys778–Cys789, Cys829–Cys917, Cys953–Cys997, Cys1054–Cys1103, Cys1065–Cys1087, and Cys1086–Cys1090. 2 N-linked (GlcNAc...) asparagine; by host glycosylation sites follow: Asn904 and Asn981. The helical transmembrane segment at 1195–1218 (GGQIHLAIMAVFKMSPGYVLGIFL) threads the bilayer. At 1219–1224 (RKLTSR) the chain is on the lumenal side. Residues 1225–1243 (ETALMVIGMAMTTVLSIPH) traverse the membrane as a helical segment. Residues 1244–1267 (DLMEFIDGISLGLILLKMVTHFDN) lie on the Cytoplasmic side of the membrane. The chain crosses the membrane as a helical span at residues 1268-1288 (TQVGTLALSLTFIKSTMPLVM). A topological domain (lumenal) is located at residue Ala1289. A helical membrane pass occupies residues 1290–1308 (WRTIMAVLFVVTLIPLCRT). The Lumenal portion of the chain corresponds to 1309-1316 (SCLQKQSH). A helical membrane pass occupies residues 1317 to 1337 (WVEITALILGAQALPVYLMTL). Topologically, residues 1338-1345 (MKGASKRS) are cytoplasmic. The helical transmembrane segment at 1346–1366 (WPLNEGIMAVGLVSLLGSALL) threads the bilayer. Topologically, residues 1367-1369 (KND) are lumenal. The helical transmembrane segment at 1370 to 1390 (VPLAGPMVAGGLLLAAYVMSG) threads the bilayer. The Cytoplasmic portion of the chain corresponds to 1391-1437 (SSADLSLEKAANVQWDEMADITGSSPIIEVKQDEDGSFSIRDVEETN). Residues 1397 to 1436 (LEKAANVQWDEMADITGSSPIIEVKQDEDGSFSIRDVEET) are interacts with and activates NS3 protease. Residues 1438 to 1458 (MITLLVKLALITVSGLYPLAI) constitute an intramembrane region (helical). Residues 1459–2143 (PVTMTLWYMW…QHALNELPES (685 aa)) lie on the Cytoplasmic side of the membrane. The 178-residue stretch at 1475–1652 (SGALWDVPSP…ERIGEPDYEV (178 aa)) folds into the Peptidase S7 domain. Catalysis depends on charge relay system; for serine protease NS3 activity residues His1525, Asp1549, and Ser1609. The region spanning 1654–1810 (EDIFRKKRLT…QSNSPIEDIE (157 aa)) is the Helicase ATP-binding domain. The segment at 1658-1661 (RKKR) is important for RNA-binding. Position 1667–1674 (1667–1674 (LHPGAGKT)) interacts with ATP. The short motif at 1758–1761 (DEAH) is the DEAH box element. The 168-residue stretch at 1820-1987 (TGFDWITDYQ…IIPTLFGPER (168 aa)) folds into the Helicase C-terminal domain. Lys1862 is subject to N6-acetyllysine; by host. Residues 2144 to 2164 (LETLMLVALLGAMTAGIFLFF) traverse the membrane as a helical segment. The Lumenal portion of the chain corresponds to 2165-2169 (MQGKG). Positions 2170–2190 (IGKLSMGLIAIAVASGLLWVA) form an intramembrane region, helical. Residue Glu2191 is a topological domain, lumenal. Residues 2192–2212 (IQPQWIAASIILEFFLMVLLV) form a helical membrane-spanning segment. The Cytoplasmic segment spans residues 2213–2225 (PEPEKQRTPQDNQ). The chain crosses the membrane as a helical span at residues 2226–2246 (LIYVILTILTIIALVAANEMG). At 2247-2270 (LIEKTKTDFGFYQAKTETTILDVD) the chain is on the lumenal side. The helical intramembrane region spans 2271–2291 (LRPASAWTLYAVATTILTPML). The Lumenal portion of the chain corresponds to 2292–2301 (RHTIENTSAN). Residues Asn2297 and Asn2301 are each glycosylated (N-linked (GlcNAc...) asparagine; by host). Positions 2302–2322 (LSLAAIANQAAVLMGLGKGWP) form an intramembrane region, helical. At 2323 to 2343 (LHRMDLGVPLLAMGCYSQVNP) the chain is on the lumenal side. Residues 2344-2364 (TTLTASLVMLLVHYAIIGPGL) form a helical membrane-spanning segment. Over 2365 to 2409 (QAKATREAQKRTAAGIMKNPTVDGITVIDLEPISYDPKFEKQLGQ) the chain is Cytoplasmic. The chain crosses the membrane as a helical span at residues 2410-2430 (VMLLVLCAGQLLLMRTTWAFC). Over 2431–2455 (EVLTLATGPILTLWEGNPGRFWNTT) the chain is Lumenal. Asn2453 is a glycosylation site (N-linked (GlcNAc...) asparagine; by host). Residues 2456 to 2476 (IAVSTANIFRGSYLAGAGLAF) form a helical membrane-spanning segment. Topologically, residues 2477–3387 (SLIKNAQTPR…SAHFESEGVL (911 aa)) are cytoplasmic. Positions 2489–2751 (TGTTGETLGE…DADLGAGTRS (263 aa)) constitute an mRNA cap 0-1 NS5-type MT domain. Ser2543 is a binding site for S-adenosyl-L-methionine. A Phosphoserine modification is found at Ser2543. The active-site For 2'-O-MTase activity is the Lys2548. Positions 2564-2567 (VVDL) match the SUMO-interacting motif motif. S-adenosyl-L-methionine contacts are provided by Gly2573, Trp2574, Thr2591, Lys2592, Asp2618, and Val2619. Residue Asp2633 is the For 2'-O-MTase activity of the active site. Ile2634 contributes to the S-adenosyl-L-methionine binding site. Active-site for 2'-O-MTase activity residues include Lys2668 and Glu2704. Tyr2706 is a binding site for S-adenosyl-L-methionine. 4 residues coordinate Zn(2+): Glu2925, His2929, Cys2934, and Cys2937. In terms of domain architecture, RdRp catalytic spans 3016-3166 (LIYADDTAGW…PLDERFSTSL (151 aa)). Zn(2+) contacts are provided by His3200, Cys3216, and Cys3335.

The protein in the N-terminal section; belongs to the class I-like SAM-binding methyltransferase superfamily. mRNA cap 0-1 NS5-type methyltransferase family. Homodimer. Interacts (via N-terminus) with host EXOC1 (via C-terminus); this interaction results in EXOC1 degradation through the proteasome degradation pathway. In terms of assembly, forms heterodimers with envelope protein E in the endoplasmic reticulum and Golgi. As to quaternary structure, homodimer; in the endoplasmic reticulum and Golgi. Interacts with protein prM. Interacts with non-structural protein 1. Homodimer; Homohexamer when secreted. Interacts with envelope protein E. In terms of assembly, interacts (via N-terminus) with serine protease NS3. As to quaternary structure, forms a heterodimer with serine protease NS3. May form homooligomers. Forms a heterodimer with NS2B. Interacts with NS4B. Interacts with unphosphorylated RNA-directed RNA polymerase NS5; this interaction stimulates RNA-directed RNA polymerase NS5 guanylyltransferase activity. Interacts with host SHFL. In terms of assembly, interacts with host MAVS; this interaction inhibits the synthesis of IFN-beta. Interacts with host SHFL. Interacts with host AUP1; the interaction occurs in the presence of Dengue virus NS4B and induces lipophagy which facilitates production of virus progeny particles. As to quaternary structure, interacts with serine protease NS3. Homodimer. Interacts with host STAT2; this interaction inhibits the phosphorylation of the latter, and, when all viral proteins are present (polyprotein), targets STAT2 for degradation. Interacts with serine protease NS3. Interacts with host PAF1 complex; the interaction may prevent the recruitment of the PAF1 complex to interferon-responsive genes, and thus reduces the immune response. Specific enzymatic cleavages in vivo yield mature proteins. Cleavages in the lumen of endoplasmic reticulum are performed by host signal peptidase, whereas cleavages in the cytoplasmic side are performed by serine protease NS3. Signal cleavage at the 2K-4B site requires a prior NS3 protease-mediated cleavage at the 4A-2K site. In terms of processing, cleaved in post-Golgi vesicles by a host furin, releasing the mature small envelope protein M, and peptide pr. This cleavage is incomplete as up to 30% of viral particles still carry uncleaved prM. Post-translationally, N-glycosylated. N-glycosylated. The excreted form is glycosylated and this is required for efficient secretion of the protein from infected cells. In terms of processing, acetylated by host KAT5. Acetylation modulates NS3 RNA-binding and unwinding activities and plays an important positive role for viral replication. Post-translationally, sumoylation of RNA-directed RNA polymerase NS5 increases NS5 protein stability allowing proper viral RNA replication. Phosphorylated on serines residues. This phosphorylation may trigger NS5 nuclear localization.

Its subcellular location is the virion. It is found in the host nucleus. The protein localises to the host cytoplasm. The protein resides in the host perinuclear region. It localises to the secreted. Its subcellular location is the virion membrane. It is found in the host endoplasmic reticulum membrane. The protein localises to the host mitochondrion. The catalysed reaction is Selective hydrolysis of -Xaa-Xaa-|-Yaa- bonds in which each of the Xaa can be either Arg or Lys and Yaa can be either Ser or Ala.. It carries out the reaction RNA(n) + a ribonucleoside 5'-triphosphate = RNA(n+1) + diphosphate. The enzyme catalyses a ribonucleoside 5'-triphosphate + H2O = a ribonucleoside 5'-diphosphate + phosphate + H(+). It catalyses the reaction ATP + H2O = ADP + phosphate + H(+). The catalysed reaction is a 5'-end (5'-triphosphoguanosine)-ribonucleoside in mRNA + S-adenosyl-L-methionine = a 5'-end (N(7)-methyl 5'-triphosphoguanosine)-ribonucleoside in mRNA + S-adenosyl-L-homocysteine. It carries out the reaction a 5'-end (N(7)-methyl 5'-triphosphoguanosine)-ribonucleoside in mRNA + S-adenosyl-L-methionine = a 5'-end (N(7)-methyl 5'-triphosphoguanosine)-(2'-O-methyl-ribonucleoside) in mRNA + S-adenosyl-L-homocysteine + H(+). Functionally, plays a role in virus budding by binding to the cell membrane and gathering the viral RNA into a nucleocapsid that forms the core of a mature virus particle. During virus entry, may induce genome penetration into the host cytoplasm after hemifusion induced by the surface proteins. Can migrate to the cell nucleus where it modulates host functions. Overcomes the anti-viral effects of host EXOC1 by sequestering and degrading the latter through the proteasome degradation pathway. In terms of biological role, inhibits RNA silencing by interfering with host Dicer. Prevents premature fusion activity of envelope proteins in trans-Golgi by binding to envelope protein E at pH6.0. After virion release in extracellular space, gets dissociated from E dimers. Its function is as follows. Acts as a chaperone for envelope protein E during intracellular virion assembly by masking and inactivating envelope protein E fusion peptide. prM is the only viral peptide matured by host furin in the trans-Golgi network probably to avoid catastrophic activation of the viral fusion activity in acidic Golgi compartment prior to virion release. prM-E cleavage is inefficient, and many virions are only partially matured. These uncleaved prM would play a role in immune evasion. Functionally, may play a role in virus budding. Exerts cytotoxic effects by activating a mitochondrial apoptotic pathway through M ectodomain. May display a viroporin activity. In terms of biological role, binds to host cell surface receptor and mediates fusion between viral and cellular membranes. Envelope protein is synthesized in the endoplasmic reticulum in the form of heterodimer with protein prM. They play a role in virion budding in the ER, and the newly formed immature particle is covered with 60 spikes composed of heterodimer between precursor prM and envelope protein E. The virion is transported to the Golgi apparatus where the low pH causes dissociation of PrM-E heterodimers and formation of E homodimers. prM-E cleavage is inefficient, and many virions are only partially matured. These uncleaved prM would play a role in immune evasion. Involved in immune evasion, pathogenesis and viral replication. Once cleaved off the polyprotein, is targeted to three destinations: the viral replication cycle, the plasma membrane and the extracellular compartment. Essential for viral replication. Required for formation of the replication complex and recruitment of other non-structural proteins to the ER-derived membrane structures. Excreted as a hexameric lipoparticle that plays a role against host immune response. Antagonizing the complement function. Binds to the host macrophages and dendritic cells. Inhibits signal transduction originating from Toll-like receptor 3 (TLR3). Its function is as follows. Disrupts the host endothelial glycocalyx layer of host pulmonary microvascular endothelial cells, inducing degradation of sialic acid and shedding of heparan sulfate proteoglycans. NS1 induces expression of sialidases, heparanase, and activates cathepsin L, which activates heparanase via enzymatic cleavage. These effects are probably linked to the endothelial hyperpermeability observed in severe dengue disease. Functionally, component of the viral RNA replication complex that functions in virion assembly and antagonizes the host immune response. In terms of biological role, required cofactor for the serine protease function of NS3. May have membrane-destabilizing activity and form viroporins. Displays three enzymatic activities: serine protease, NTPase and RNA helicase. NS3 serine protease, in association with NS2B, performs its autocleavage and cleaves the polyprotein at dibasic sites in the cytoplasm: C-prM, NS2A-NS2B, NS2B-NS3, NS3-NS4A, NS4A-2K and NS4B-NS5. NS3 RNA helicase binds RNA and unwinds dsRNA in the 3' to 5' direction. Its function is as follows. Regulates the ATPase activity of the NS3 helicase activity. NS4A allows NS3 helicase to conserve energy during unwinding. Plays a role in the inhibition of the host innate immune response. Interacts with host MAVS and thereby prevents the interaction between RIGI and MAVS. In turn, IFN-beta production is impaired. Interacts with host AUP1 which mediates induction of lipophagy in host cells and facilitates production of virus progeny particles. Functionally, functions as a signal peptide for NS4B and is required for the interferon antagonism activity of the latter. In terms of biological role, induces the formation of ER-derived membrane vesicles where the viral replication takes place. Inhibits interferon (IFN)-induced host STAT1 phosphorylation and nuclear translocation, thereby preventing the establishment of cellular antiviral state by blocking the IFN-alpha/beta pathway. Replicates the viral (+) and (-) RNA genome, and performs the capping of genomes in the cytoplasm. NS5 methylates viral RNA cap at guanine N-7 and ribose 2'-O positions. Besides its role in RNA genome replication, also prevents the establishment of cellular antiviral state by blocking the interferon-alpha/beta (IFN-alpha/beta) signaling pathway. Inhibits host TYK2 and STAT2 phosphorylation, thereby preventing activation of JAK-STAT signaling pathway. May reduce immune responses by preventing the recruitment of the host PAF1 complex to interferon-responsive genes. This is Genome polyprotein from Dengue virus type 4 (strain Thailand/0348/1991) (DENV-4).